A 203-amino-acid polypeptide reads, in one-letter code: Small ribosomal subunit protein uS4c (203 aa).

The segment at 18–42 (LPGLTSKRPKNRKDSMNMNRSSSRK) is disordered. Positions 33-42 (MNMNRSSSRK) are enriched in polar residues. Positions 91-152 (MRLDNIIFRL…QPRLRAIIKK (62 aa)) constitute an S4 RNA-binding domain.

It belongs to the universal ribosomal protein uS4 family. Part of the 30S ribosomal subunit. Contacts protein S5. The interaction surface between S4 and S5 is involved in control of translational fidelity.

The protein localises to the plastid. It is found in the chloroplast. Its function is as follows. One of the primary rRNA binding proteins, it binds directly to 16S rRNA where it nucleates assembly of the body of the 30S subunit. In terms of biological role, with S5 and S12 plays an important role in translational accuracy. This chain is Small ribosomal subunit protein uS4c (rps4), found in Pinus koraiensis (Korean pine).